An 81-amino-acid chain; its full sequence is Putative snRNP Sm-like protein (81 aa).

Residues 13–81 enclose the Sm domain; that stretch reads RPLDALGNSL…RGDNIVYISP (69 aa).

Belongs to the snRNP Sm proteins family.

The sequence is that of Putative snRNP Sm-like protein from Methanothermobacter thermautotrophicus (strain ATCC 29096 / DSM 1053 / JCM 10044 / NBRC 100330 / Delta H) (Methanobacterium thermoautotrophicum).